The primary structure comprises 1582 residues: Nik-related protein kinase (1582 aa).

Residues 25–313 (FSLDKTIGLG…SANMLQHPFV (289 aa)) form the Protein kinase domain. ATP-binding positions include 31 to 39 (IGLGTYGRI) and Lys-54. Asp-177 functions as the Proton acceptor in the catalytic mechanism. Composition is skewed to low complexity over residues 492 to 507 (QVQS…QTQT), 527 to 538 (PEQQRQGQAPEQ), and 551 to 572 (EQNQ…AQAE). The tract at residues 492–579 (QVQSQVSKKQ…QAETEAEEPE (88 aa)) is disordered. Residues 725 to 759 (QRRQRRWEDIFNQHEEELRQVDKDKEDESSDNDEV) adopt a coiled-coil conformation. Disordered regions lie at residues 783–859 (EVQE…PPYS) and 926–1156 (ASAD…GSGM). 3 stretches are compositionally biased toward polar residues: residues 803 to 814 (FSSSVPQRSLLE), 825 to 834 (RSSQNRQNWL), and 850 to 859 (RRSQSSPPYS). Phosphoserine occurs at positions 852 and 855. Over residues 926–944 (ASADTDGDDDDESNDTFED) the composition is skewed to acidic residues. 2 stretches are compositionally biased toward basic and acidic residues: residues 965-978 (VCKD…KFVD) and 999-1016 (GSCK…EEAY). Residues Ser-1027, Ser-1031, and Ser-1034 each carry the phosphoserine modification. Basic and acidic residues-rich tracts occupy residues 1043–1061 (QEEH…EGDG) and 1125–1135 (PDHESDNKDIS). The span at 1136–1154 (ESSTQSDFSANHSSPSKGS) shows a compositional bias: polar residues. One can recognise a CNH domain in the interval 1209-1552 (TSEICCGSLW…RFLCTRGDKL (344 aa)).

This sequence belongs to the protein kinase superfamily. STE Ser/Thr protein kinase family. STE20 subfamily.

The enzyme catalyses L-seryl-[protein] + ATP = O-phospho-L-seryl-[protein] + ADP + H(+). It catalyses the reaction L-threonyl-[protein] + ATP = O-phospho-L-threonyl-[protein] + ADP + H(+). Functionally, may phosphorylate cofilin-1 and induce actin polymerization through this process, during the late stages of embryogenesis. Involved in the TNF-alpha-induced signaling pathway. This chain is Nik-related protein kinase (NRK), found in Homo sapiens (Human).